Reading from the N-terminus, the 394-residue chain is MAKEVFQRTKPHMNVGTIGHVDHGKTTLTAAISIYCSKVNKDAKALKYEDIDNAPEEKARGITINARHIEYETAGRHYAHVDCPGHADYIKNMITGAAQMDAAILLVAADSGAEPQTKEHLLLAQRMGIKKIIVFLNKLDLADPELVELVEVEVLELVEKYGFPGDTPIVKGSAFGAMSNPDDPEATKCIKELLETMDSYFDLPERDIDKPFLLAIEDVFSISGRGTVATGRIERGIIKVGQEVEIVGIRETRKTTVTGVEMFQKILEQGEAGDNVGLLLRGVDKKDVERGQVIAAIGTITPHKKFKASIYCLTKEEGGRHKPFFSGYRPQFFFRTTDVTGMVSLEGKEMVMPGDNVDIVVELISLIAMDKNVEFAVREGGRTVASGRILEILE.

Positions 10–205 (KPHMNVGTIG…TMDSYFDLPE (196 aa)) constitute a tr-type G domain. The interval 19-26 (GHVDHGKT) is G1. 19-26 (GHVDHGKT) serves as a coordination point for GTP. T26 is a Mg(2+) binding site. The segment at 61-65 (GITIN) is G2. A G3 region spans residues 82–85 (DCPG). Residues 82-86 (DCPGH) and 137-140 (NKLD) contribute to the GTP site. A G4 region spans residues 137-140 (NKLD). A G5 region spans residues 173-175 (SAF).

This sequence belongs to the TRAFAC class translation factor GTPase superfamily. Classic translation factor GTPase family. EF-Tu/EF-1A subfamily. In terms of assembly, monomer.

It localises to the cytoplasm. The enzyme catalyses GTP + H2O = GDP + phosphate + H(+). Its function is as follows. GTP hydrolase that promotes the GTP-dependent binding of aminoacyl-tRNA to the A-site of ribosomes during protein biosynthesis. This chain is Elongation factor Tu, found in Borrelia hermsii (strain HS1 / DAH).